Here is a 59-residue protein sequence, read N- to C-terminus: uncharacterized protein (59 aa).

This is an uncharacterized protein from Rickettsia conorii (strain ATCC VR-613 / Malish 7).